Reading from the N-terminus, the 56-residue chain is Attractin (56 aa).

Disulfide bonds link C4–C41, C13–C33, and C20–C26.

In terms of tissue distribution, produced by the albumen gland of the egg cordons.

The protein localises to the secreted. Functionally, water-borne pheromone that attract the marine mollusk Aplysia into breeding aggregations and coordinate male and female reproductive behavior within the aggregation. This is Attractin (ATT) from Aplysia vaccaria (California black sea hare).